The following is an 89-amino-acid chain: Dynein light chain 1, cytoplasmic (89 aa).

This sequence belongs to the dynein light chain family. In terms of assembly, interacts with mett-10; the interaction is direct, and is required for the nuclear localization of mett-10. Component of a dynein-regulating complex composed of at least bicd-1, dlc-1 and egal-1. Interacts with egal-1 and unc-83. Interacts with fbf-2. Broadly expressed in tissues including the intestine, body wall muscles, germs cells, oocytes, the rectal valve and cells in the head.

The protein resides in the cytoplasm. It localises to the cytoskeleton. It is found in the nucleus envelope. The protein localises to the cytoplasmic granule. In terms of biological role, acts as a non-catalytic accessory component of a dynein complex. Part of a complex with bicd-1 and egal-1, which is recruited to the nuclear envelope by unc-83, where in turn, it recruits dynein to the nuclear surface and regulates nuclear migrations in hypodermal precursor cells. Probably within a dynein motor complex, plays a role in the cell fate specification of the germline and oogenesis. In particular, it inhibits germ cell proliferation. Regulates the function and localization of the RNA-binding protein fbf-2 in the germline. Plays a role in mitotic and meiotic processes. Involved in the pairing of homologous chromosomes. Independently of its dynein-mediated functions, plays a role in germ cell apoptosis. The polypeptide is Dynein light chain 1, cytoplasmic (Caenorhabditis elegans).